Consider the following 905-residue polypeptide: DNA mismatch repair protein MutS (905 aa).

The segment at 389-410 is disordered; it reads ERPANPEGTYPTDAETSGDTLP. ATP is bound at residue 638-645; sequence GPNMAGKS. The segment at 826–847 is disordered; it reads RDAARGTNSAPSRQTLPGLDLP. Over residues 831–840 the composition is skewed to polar residues; the sequence is GTNSAPSRQT.

The protein belongs to the DNA mismatch repair MutS family.

In terms of biological role, this protein is involved in the repair of mismatches in DNA. It is possible that it carries out the mismatch recognition step. This protein has a weak ATPase activity. This Nitratidesulfovibrio vulgaris (strain ATCC 29579 / DSM 644 / CCUG 34227 / NCIMB 8303 / VKM B-1760 / Hildenborough) (Desulfovibrio vulgaris) protein is DNA mismatch repair protein MutS.